We begin with the raw amino-acid sequence, 677 residues long: Probable sulfate transporter 4.2 (677 aa).

Residues 1 to 83 (MSLAVKDLST…RTYRWHQYFK (83 aa)) are Cytoplasmic-facing. A helical membrane pass occupies residues 84–104 (LDLMAGITVGIMLVPQAMSYA). Residues 105 to 108 (RLAG) are Extracellular-facing. A helical membrane pass occupies residues 109-129 (LQPIYGLYSSFVPVFVYAVFG). The Cytoplasmic segment spans residues 130-133 (SSRQ). Residues 134–154 (LAVGPVALVSLLVSNALSGIV) form a helical membrane-spanning segment. At 155–161 (DPSEELY) the chain is on the extracellular side. The chain crosses the membrane as a helical span at residues 162 to 182 (TELAILLALMVGIFESIMGFL). At 183–189 (RLGWLIR) the chain is on the cytoplasmic side. A helical transmembrane segment spans residues 190 to 210 (FISHSVISGFTTASAVVIGLS). Over 211 to 241 (QLKYFLGYSVSRSSKIMPVIDSIIAGADQFK) the chain is Extracellular. A helical membrane pass occupies residues 242–262 (WPPFLLGCTILVILLVMKHVG). Over 263–269 (KAKKELR) the chain is Cytoplasmic. Residues 270-290 (FIRAAGPLTGLALGTIIAKVF) traverse the membrane as a helical segment. The Extracellular segment spans residues 291 to 318 (HPPSITLVGDIPQGLPKFSFPKSFDHAK). Residues 319–339 (LLLPTSALITGVAILESVGIA) traverse the membrane as a helical segment. Residues 340 to 355 (KALAAKNRYELDSNSE) are Cytoplasmic-facing. A helical membrane pass occupies residues 356–376 (LFGLGVANIFGSLFSAYPTTG). Residues 377-392 (SFSRSAVNSESEAKTG) are Extracellular-facing. Residues 393 to 413 (LSGLVTGIIIGCSLLFLTPMF) traverse the membrane as a helical segment. Residues 414-420 (KFIPQCA) are Cytoplasmic-facing. The helical transmembrane segment at 421-441 (LAAIVISAVSGLVDYEGAIFL) threads the bilayer. Over 442–459 (WRVDKRDFTLWTITSTTT) the chain is Extracellular. The chain crosses the membrane as a helical span at residues 460–480 (LFFGIEIGVLIGVGFSLAFVI). The Cytoplasmic segment spans residues 481 to 677 (HESANPHIAV…LEEPLLSREK (197 aa)). One can recognise an STAS domain in the interval 505–629 (QYPEAYTYNG…VRVHDAVQVC (125 aa)).

It belongs to the SLC26A/SulP transporter (TC 2.A.53) family.

It localises to the membrane. Functionally, h(+)/sulfate cotransporter that may play a role in the regulation of sulfate assimilation. The sequence is that of Probable sulfate transporter 4.2 (SULTR4;2) from Arabidopsis thaliana (Mouse-ear cress).